Reading from the N-terminus, the 351-residue chain is Glycerol-1-phosphate dehydrogenase [NAD(P)+] (351 aa).

NAD(+) contacts are provided by residues 97–101 and 119–122; these read GKTID and TAPS. Aspartate 124 provides a ligand contact to substrate. Serine 128 contributes to the NAD(+) binding site. Aspartate 171 contacts substrate. 2 residues coordinate Zn(2+): aspartate 171 and histidine 251. Histidine 255 provides a ligand contact to substrate. Histidine 267 is a binding site for Zn(2+).

It belongs to the glycerol-1-phosphate dehydrogenase family. As to quaternary structure, homodimer. Requires Zn(2+) as cofactor.

It is found in the cytoplasm. The enzyme catalyses sn-glycerol 1-phosphate + NAD(+) = dihydroxyacetone phosphate + NADH + H(+). It catalyses the reaction sn-glycerol 1-phosphate + NADP(+) = dihydroxyacetone phosphate + NADPH + H(+). It functions in the pathway membrane lipid metabolism; glycerophospholipid metabolism. Functionally, catalyzes the NAD(P)H-dependent reduction of dihydroxyacetonephosphate (DHAP or glycerone phosphate) to glycerol 1-phosphate (G1P). The G1P thus generated is used as the glycerophosphate backbone of phospholipids in the cellular membranes of Archaea. This chain is Glycerol-1-phosphate dehydrogenase [NAD(P)+], found in Metallosphaera sedula (strain ATCC 51363 / DSM 5348 / JCM 9185 / NBRC 15509 / TH2).